The following is a 315-amino-acid chain: 1,2-dihydroxy-3,5-cyclohexadiene-1,4-dicarboxylate dehydrogenase (315 aa).

H159, H203, and H255 together coordinate a divalent metal cation.

This sequence belongs to the PdxA family.

It catalyses the reaction (3S,4R)-3,4-dihydroxycyclohexa-1,5-diene-1,4-dicarboxylate + NAD(+) = 3,4-dihydroxybenzoate + CO2 + NADH. Its function is as follows. Involved in the degradation of terephthalate (TPA) via the protocatechuate (PCA) 4,5-cleavage pathway. Catalyzes the dehydrogenation of 1,2-dihydroxy-3,5-cyclohexadiene-1,4-dicarboxylate (DCD) to yield protocatechuate (PCA). The polypeptide is 1,2-dihydroxy-3,5-cyclohexadiene-1,4-dicarboxylate dehydrogenase (tphBI) (Comamonas sp).